The chain runs to 278 residues: Envelope glycoprotein L (278 aa).

A signal peptide spans 1–30 (MCRRPDCGFSFSPGPVVLLWCCLLLPIVSS). In terms of domain architecture, gL betaherpesvirus-type spans 43 to 256 (VPAECPELTR…DKYYAGLPPE (214 aa)). A disulfide bond links cysteine 154 and cysteine 159.

This sequence belongs to the herpesviridae glycoprotein L (gL) family. Betaherpesvirinae gL subfamily. Interacts with glycoprotein H (gH); this interaction is necessary for the correct processing and cell surface expression of gH. Forms the envelope pentamer complex (PC) composed of gH, gL, UL128, UL130, and UL131A. The pentamer interacts with host NRP2. Forms the envelope trimer complex composed of gH, gL, and gO. The trimer interacts with host PDGFRA. The trimer also interacts with host EPHA2.

The protein localises to the virion membrane. It localises to the host cell membrane. Its subcellular location is the host Golgi apparatus. The protein resides in the host trans-Golgi network. Functionally, the heterodimer glycoprotein H-glycoprotein L is required for the fusion of viral and plasma membranes leading to virus entry into the host cell. Acts as a functional inhibitor of gH and maintains gH in an inhibited form. Upon binding to host integrins, gL dissociates from gH leading to activation of the viral fusion glycoproteins gB and gH. In human cytomegalovirus, forms two distincts complexes to mediate viral entry, a trimer and a pentamer at the surface of the virion envelope. The gH-gL-gO trimer is required for infection in fibroblasts by interacting with host PDGFRA, and in glioblastoma cells by interacting with host EPHA2. The gH-gL-UL128-UL130-UL131A pentamer is essential for viral entry in epithelial, endothelial and myeloid cells via interaction with host NRP2. This Homo sapiens (Human) protein is Envelope glycoprotein L.